The primary structure comprises 345 residues: Fe-S cluster assembly protein DRE2 (345 aa).

The N-terminal SAM-like domain stretch occupies residues 29-163 (GDSGDRTLLL…KPDYAEQEVV (135 aa)). The segment at 164–237 (PLRFGAKKVN…EDTLLTEADL (74 aa)) is linker. Positions 247, 258, 261, and 263 each coordinate [2Fe-2S] cluster. Residues 247–263 (CAPQPGKKRRACKDCTC) are fe-S binding site A. Positions 308, 311, 319, and 322 each coordinate [4Fe-4S] cluster. Short sequence motifs (cx2C motif) lie at residues 308-311 (CNSC) and 319-322 (CADC). Positions 308-322 (CNSCYLGDAFRCADC) are fe-S binding site B.

The protein belongs to the anamorsin family. As to quaternary structure, monomer. Interacts with TAH18. Interacts with MIA40. [2Fe-2S] cluster is required as a cofactor. It depends on [4Fe-4S] cluster as a cofactor.

Its subcellular location is the cytoplasm. It localises to the mitochondrion intermembrane space. Functionally, component of the cytosolic iron-sulfur (Fe-S) protein assembly (CIA) machinery required for the maturation of extramitochondrial Fe-S proteins. Part of an electron transfer chain functioning in an early step of cytosolic Fe-S biogenesis, facilitating the de novo assembly of a [4Fe-4S] cluster on the scaffold complex CFD1-NBP35. Electrons are transferred to DRE2 from NADPH via the FAD- and FMN-containing protein TAH18. TAH18-DRE2 are also required for the assembly of the diferric tyrosyl radical cofactor of ribonucleotide reductase (RNR), probably by providing electrons for reduction during radical cofactor maturation in the catalytic small subunit RNR2. This Podospora anserina (strain S / ATCC MYA-4624 / DSM 980 / FGSC 10383) (Pleurage anserina) protein is Fe-S cluster assembly protein DRE2.